We begin with the raw amino-acid sequence, 308 residues long: Glutaminase (308 aa).

The substrate site is built by S66, N117, E162, N169, Y193, Y244, and V262.

This sequence belongs to the glutaminase family. Homotetramer.

The catalysed reaction is L-glutamine + H2O = L-glutamate + NH4(+). This Natranaerobius thermophilus (strain ATCC BAA-1301 / DSM 18059 / JW/NM-WN-LF) protein is Glutaminase.